A 125-amino-acid chain; its full sequence is Apolipoprotein C-IV (125 aa).

A signal peptide spans 1–27 (MSLLRHSLQALPALCLCVLVLACIGAC).

It belongs to the apolipoprotein C4 family.

The protein resides in the secreted. Functionally, may participate in lipoprotein metabolism. The polypeptide is Apolipoprotein C-IV (APOC4) (Ateles geoffroyi (Black-handed spider monkey)).